Consider the following 282-residue polypeptide: Biotin synthase (282 aa).

The region spanning 1-228 (MQEIFLCSIS…NARLMVAGGR (228 aa)) is the Radical SAM core domain. [4Fe-4S] cluster-binding residues include cysteine 17, cysteine 21, and cysteine 24. [2Fe-2S] cluster-binding residues include cysteine 61, cysteine 96, cysteine 154, and arginine 221.

This sequence belongs to the radical SAM superfamily. Biotin synthase family. In terms of assembly, homodimer. It depends on [4Fe-4S] cluster as a cofactor. Requires [2Fe-2S] cluster as cofactor.

The enzyme catalyses (4R,5S)-dethiobiotin + (sulfur carrier)-SH + 2 reduced [2Fe-2S]-[ferredoxin] + 2 S-adenosyl-L-methionine = (sulfur carrier)-H + biotin + 2 5'-deoxyadenosine + 2 L-methionine + 2 oxidized [2Fe-2S]-[ferredoxin]. The protein operates within cofactor biosynthesis; biotin biosynthesis; biotin from 7,8-diaminononanoate: step 2/2. Catalyzes the conversion of dethiobiotin (DTB) to biotin by the insertion of a sulfur atom into dethiobiotin via a radical-based mechanism. This chain is Biotin synthase, found in Helicobacter pylori (strain ATCC 700392 / 26695) (Campylobacter pylori).